Here is a 123-residue protein sequence, read N- to C-terminus: Fluoride-specific ion channel FluC 2 (123 aa).

The next 2 membrane-spanning stretches (helical) occupy residues 1-21 (MTMLWVCLAGGLGAVARFLLD) and 30-50 (VPVPLGTLVINVMGSLLLGLI). Na(+) is bound by residues G74 and T77. A helical membrane pass occupies residues 99–119 (ALHCMGMAIAGVLAAILGLAL).

Belongs to the fluoride channel Fluc/FEX (TC 1.A.43) family.

The protein resides in the cell membrane. The catalysed reaction is fluoride(in) = fluoride(out). With respect to regulation, na(+) is not transported, but it plays an essential structural role and its presence is essential for fluoride channel function. Functionally, fluoride-specific ion channel. Important for reducing fluoride concentration in the cell, thus reducing its toxicity. The protein is Fluoride-specific ion channel FluC 2 of Cutibacterium acnes (strain DSM 16379 / KPA171202) (Propionibacterium acnes).